We begin with the raw amino-acid sequence, 401 residues long: Argininosuccinate synthase (401 aa).

Ala-10–Ser-18 lines the ATP pocket. Tyr-89 lines the L-citrulline pocket. Gly-119 lines the ATP pocket. Positions 121, 125, and 126 each coordinate L-aspartate. Asn-125 provides a ligand contact to L-citrulline. Positions 129, 177, 186, 262, and 274 each coordinate L-citrulline.

It belongs to the argininosuccinate synthase family. Type 1 subfamily. Homotetramer.

The protein localises to the cytoplasm. The enzyme catalyses L-citrulline + L-aspartate + ATP = 2-(N(omega)-L-arginino)succinate + AMP + diphosphate + H(+). The protein operates within amino-acid biosynthesis; L-arginine biosynthesis; L-arginine from L-ornithine and carbamoyl phosphate: step 2/3. In Thermosynechococcus vestitus (strain NIES-2133 / IAM M-273 / BP-1), this protein is Argininosuccinate synthase.